The primary structure comprises 354 residues: Serum paraoxonase/arylesterase 2 (354 aa).

C42 and C352 form a disulfide bridge. 2 residues coordinate Ca(2+): E53 and D54. H114 functions as the Proton acceptor in the catalytic mechanism. Ca(2+)-binding residues include I116, N167, D168, and N223. The N-linked (GlcNAc...) asparagine glycan is linked to N254. Positions 268 and 269 each coordinate Ca(2+). N-linked (GlcNAc...) asparagine glycosylation is found at N269 and N323.

This sequence belongs to the paraoxonase family. As to quaternary structure, homotrimer. Ca(2+) serves as cofactor. In terms of processing, the signal sequence is not cleaved. As to expression, widely expressed with highest expression in liver, lung, placenta, testis and heart.

It localises to the membrane. It carries out the reaction a phenyl acetate + H2O = a phenol + acetate + H(+). The enzyme catalyses an N-acyl-L-homoserine lactone + H2O = an N-acyl-L-homoserine + H(+). Its function is as follows. Capable of hydrolyzing lactones and a number of aromatic carboxylic acid esters. Has antioxidant activity. Is not associated with high density lipoprotein. Prevents LDL lipid peroxidation, reverses the oxidation of mildly oxidized LDL, and inhibits the ability of MM-LDL to induce monocyte chemotaxis. The chain is Serum paraoxonase/arylesterase 2 (PON2) from Homo sapiens (Human).